Reading from the N-terminus, the 851-residue chain is DNA mismatch repair protein MutS (851 aa).

An ATP-binding site is contributed by 614-621 (GPNMGGKS).

It belongs to the DNA mismatch repair MutS family.

In terms of biological role, this protein is involved in the repair of mismatches in DNA. It is possible that it carries out the mismatch recognition step. This protein has a weak ATPase activity. This Yersinia pseudotuberculosis serotype O:1b (strain IP 31758) protein is DNA mismatch repair protein MutS.